Here is a 315-residue protein sequence, read N- to C-terminus: GTP cyclohydrolase MptA 1 (315 aa).

This sequence belongs to the GTP cyclohydrolase IV family. Homodimer. Requires Fe(2+) as cofactor.

The catalysed reaction is GTP + H2O = 7,8-dihydroneopterin 2',3'-cyclic phosphate + formate + diphosphate + H(+). The protein operates within cofactor biosynthesis; 5,6,7,8-tetrahydromethanopterin biosynthesis. Converts GTP to 7,8-dihydro-D-neopterin 2',3'-cyclic phosphate, the first intermediate in the biosynthesis of coenzyme methanopterin. The protein is GTP cyclohydrolase MptA 1 of Methanocella arvoryzae (strain DSM 22066 / NBRC 105507 / MRE50).